Reading from the N-terminus, the 118-residue chain is Small ribosomal subunit protein bS6 (118 aa).

The protein belongs to the bacterial ribosomal protein bS6 family.

In terms of biological role, binds together with bS18 to 16S ribosomal RNA. The chain is Small ribosomal subunit protein bS6 from Saccharopolyspora erythraea (strain ATCC 11635 / DSM 40517 / JCM 4748 / NBRC 13426 / NCIMB 8594 / NRRL 2338).